We begin with the raw amino-acid sequence, 137 residues long: Basic phospholipase A2 DsM-S1 (137 aa).

Positions 1–16 are cleaved as a signal peptide; sequence MRTLWIVAVCLIGVEG. 7 disulfides stabilise this stretch: cysteine 42/cysteine 131, cysteine 44/cysteine 60, cysteine 59/cysteine 111, cysteine 65/cysteine 137, cysteine 66/cysteine 104, cysteine 73/cysteine 97, and cysteine 91/cysteine 102. The Ca(2+) site is built by tyrosine 43, glycine 45, and glycine 47. Residue histidine 63 is part of the active site. Aspartate 64 is a binding site for Ca(2+). Aspartate 105 is a catalytic residue.

Belongs to the phospholipase A2 family. Group II subfamily. D49 sub-subfamily. Ca(2+) serves as cofactor. As to expression, expressed by the venom gland.

It is found in the secreted. It carries out the reaction a 1,2-diacyl-sn-glycero-3-phosphocholine + H2O = a 1-acyl-sn-glycero-3-phosphocholine + a fatty acid + H(+). Functionally, snake venom phospholipase A2 (PLA2) that is neurotoxic. PLA2 catalyzes the calcium-dependent hydrolysis of the 2-acyl groups in 3-sn-phosphoglycerides. This chain is Basic phospholipase A2 DsM-S1, found in Daboia siamensis (Eastern Russel's viper).